A 142-amino-acid polypeptide reads, in one-letter code: Hemoglobin subunit zeta (142 aa).

Residue serine 2 is modified to N-acetylserine. Residues 2 to 142 (SLTKAERTMV…VSSVLTEKYR (141 aa)) enclose the Globin domain. Serine 53 carries the phosphoserine modification. Histidine 59 provides a ligand contact to heme b. A Phosphoserine modification is found at serine 73. Heme b is bound at residue histidine 88.

This sequence belongs to the globin family. As to quaternary structure, heterotetramer of two zeta chains and beta-type chains.

Its function is as follows. The zeta chain is an alpha-type chain of mammalian embryonic hemoglobin. In Equus caballus (Horse), this protein is Hemoglobin subunit zeta (HBZ1).